The sequence spans 605 residues: Capsid scaffolding protein (605 aa).

Active-site charge relay system residues include His48, Ser116, and His139. The tract at residues 235-275 is disordered; it reads ASDAPDLQKPDKALQSPPPASTDPDTMLSGNAGEGATACGG. An interaction with pAP region spans residues 281–300; the sequence is QDLISVPRNTFMTLLQTNLD. Disordered regions lie at residues 403 to 432 and 489 to 588; these read DYVP…PGED and PHQS…KSVS. Positions 410–416 match the Nuclear localization signal motif; sequence RSNKRKR. The segment covering 568 to 579 has biased composition (polar residues); it reads ASASGVAQSKEP. Residues 585-605 form an interaction with major capsid protein region; it reads KSVSAHLKSIFCEELLNKRVA.

This sequence belongs to the herpesviridae capsid scaffolding protein family. In terms of assembly, homomultimer. Interacts with major capsid protein. As to quaternary structure, exists in a monomer-dimer equilibrium with the dimer being the active species. In terms of processing, capsid scaffolding protein is cleaved by assemblin after formation of the spherical procapsid. As a result, the capsid obtains its mature, icosahedral shape. Cleavages occur at two or more sites: release (R-site) and maturation (M-site).

It is found in the host cytoplasm. The protein resides in the host nucleus. It carries out the reaction Cleaves -Ala-|-Ser- and -Ala-|-Ala- bonds in the scaffold protein.. In terms of biological role, acts as a scaffold protein by binding major capsid protein in the cytoplasm, inducing the nuclear localization of both proteins. Multimerizes in the nucleus such as major capsid protein forms the icosahedral T=16 capsid. Autocatalytic cleavage releases the assembly protein, and subsequently abolishes interaction with major capsid protein. Cleavages products are evicted from the capsid before or during DNA packaging. Functionally, protease that plays an essential role in virion assembly within the nucleus. Catalyzes the cleavage of the assembly protein after formation of the spherical procapsid. By that cleavage, the capsid matures and gains its icosahedral shape. The cleavage sites seem to include -Ala-Ser-, -Ala-Ala-, as well as Ala-Thr bonds. Assemblin and cleavages products are evicted from the capsid before or during DNA packaging. Plays a major role in capsid assembly. Acts as a scaffold protein by binding major capsid protein. Multimerizes in the nucleus such as major capsid protein forms the icosahedral T=16 capsid. Cleaved by assemblin after capsid completion. The cleavages products are evicted from the capsid before or during DNA packaging. This Epstein-Barr virus (strain AG876) (HHV-4) protein is Capsid scaffolding protein.